The following is a 164-amino-acid chain: Succinate dehydrogenase assembly factor 2, mitochondrial (164 aa).

It belongs to the SDHAF2 family. In terms of assembly, interacts with the flavoprotein subunit within the SDH catalytic dimer.

Its subcellular location is the mitochondrion matrix. In terms of biological role, plays an essential role in the assembly of succinate dehydrogenase (SDH), an enzyme complex (also referred to as respiratory complex II) that is a component of both the tricarboxylic acid (TCA) cycle and the mitochondrial electron transport chain, and which couples the oxidation of succinate to fumarate with the reduction of ubiquinone (coenzyme Q) to ubiquinol. Required for flavinylation (covalent attachment of FAD) of the flavoprotein subunit of the SDH catalytic dimer. The polypeptide is Succinate dehydrogenase assembly factor 2, mitochondrial (Lodderomyces elongisporus (strain ATCC 11503 / CBS 2605 / JCM 1781 / NBRC 1676 / NRRL YB-4239) (Yeast)).